A 312-amino-acid polypeptide reads, in one-letter code: Pre-mRNA-splicing factor 38A (312 aa).

Residues 1-179 are N-terminal protein interaction domain; the sequence is MANRTVKDAH…VLEEAEQLEP (179 aa). Residues Ser11, Ser193, Ser194, Ser209, and Ser226 each carry the phosphoserine modification. The stretch at 170-204 forms a coiled coil; the sequence is VLEEAEQLEPRVSALEEDMDDVESSEEEEEEDEKL. The interval 181–312 is disordered; sequence VSALEEDMDD…SHKKSRRGNE (132 aa). A compositionally biased stretch (acidic residues) spans 184 to 202; it reads LEEDMDDVESSEEEEEEDE. Basic and acidic residues predominate over residues 203–224; that stretch reads KLERVPSPDHRRRSYRDLDKPR. Basic residues-rich tracts occupy residues 225 to 294 and 301 to 312; these read RSPA…RSHS and KKSHKKSRRGNE.

This sequence belongs to the PRP38 family. In terms of assembly, component of the spliceosome B complex. Interacts (via N-terminal interaction domain) with ZMAT2 and MFAP1.

The protein resides in the nucleus. Involved in pre-mRNA splicing as a component of the spliceosome. The chain is Pre-mRNA-splicing factor 38A (Prpf38a) from Mus musculus (Mouse).